The chain runs to 106 residues: UPF0091 protein RP266 (106 aa).

It belongs to the UPF0091 family.

The chain is UPF0091 protein RP266 from Rickettsia prowazekii (strain Madrid E).